A 369-amino-acid polypeptide reads, in one-letter code: Aspartate beta-hydroxylase domain-containing protein 2 (369 aa).

Residues 1–58 lie on the Cytoplasmic side of the membrane; sequence MVWAPLGPPRTDCLTLLHTPSKDSPKMSLEWLVAWSWSLDGLRDCIATGIQSVRDCDT. A helical transmembrane segment spans residues 59–79; the sequence is TAVITVACLLVLFVWYCYHVG. The Lumenal segment spans residues 80-369; sequence REQPRPYVSV…ALDFIFAPGR (290 aa). N211 carries N-linked (GlcNAc...) asparagine glycosylation. 2-oxoglutarate contacts are provided by W228 and S272. H283 is a Fe cation binding site. 292-294 contacts 2-oxoglutarate; the sequence is RCH. H328 is a Fe cation binding site. 2-oxoglutarate is bound at residue R341.

It belongs to the aspartyl/asparaginyl beta-hydroxylase family. Requires Fe cation as cofactor.

The protein localises to the membrane. Its function is as follows. May function as 2-oxoglutarate-dependent dioxygenase. This chain is Aspartate beta-hydroxylase domain-containing protein 2 (ASPHD2), found in Homo sapiens (Human).